A 62-amino-acid chain; its full sequence is Large ribosomal subunit protein eL37 (62 aa).

Zn(2+) is bound by residues Cys20, Cys23, Cys35, and Cys38. The segment at 20–38 adopts a C4-type zinc-finger fold; that stretch reads CRRCGRVSYNVKKGYCAAC.

Belongs to the eukaryotic ribosomal protein eL37 family. As to quaternary structure, part of the 50S ribosomal subunit. It depends on Zn(2+) as a cofactor.

In terms of biological role, binds to the 23S rRNA. In Pyrococcus furiosus (strain ATCC 43587 / DSM 3638 / JCM 8422 / Vc1), this protein is Large ribosomal subunit protein eL37.